The following is a 179-amino-acid chain: Photosystem I assembly protein Ycf3 (179 aa).

TPR repeat units lie at residues 29-62 (AFSYYRAGMSAQSEGKYAEALENYYEALQLEEDP), 66-99 (SYTLYNIGLIYGNNGNYSQALEYYHQALELNSNL), and 126-159 (NLEIRNDEYLELAKEFFDKAAEYWRQALKLAPDN).

It belongs to the Ycf3 family.

The protein localises to the plastid. It is found in the chloroplast thylakoid membrane. Essential for the assembly of the photosystem I (PSI) complex. May act as a chaperone-like factor to guide the assembly of the PSI subunits. This chain is Photosystem I assembly protein Ycf3, found in Trieres chinensis (Marine centric diatom).